Consider the following 483-residue polypeptide: MTALKTEQNIGRITQIIGPVIDAVFSPNKMPNIYNSVVIEGKNDVGDTIKCVAEVQQLLGDNVVRAVSMSATDGLMRGMTVVDTGAALSVPVGKNTLGRIFNVLGEPVDELGAVSTPEGMLPIHRAAPAFVDLDTNLSIFETGIKVVDLLAPYRRGGKIGLFGGAGVGKTVLIMELIVNNNIAKAHGGVSVFAGVGERTREGNDLYQEMCESKVIDTANLANSKVALVYGQMNEPPGARMRVGLTALTMAEYFRDVNNQDVLLFVDNIFRFVQAGSEVSALLGRMPSAVGYQPTLSTEMGSLQERITSTKTGSITSIQAVYVPADDLTDPAPATTFAHLDATTVLSRNLAAKGIYPAVDPLDSTSTMLQPWILGDDHYDTAQGVKQTLQRYKELQDIIAILGLDELSEEDRLTVARARKVERFLSQPFFVAEVFTGSPGKYVSLAESIQGFKMILGGELDDLPEQAFYLVGNIDEAVEKAAKL.

163–170 contributes to the ATP binding site; that stretch reads GGAGVGKT.

Belongs to the ATPase alpha/beta chains family. F-type ATPases have 2 components, CF(1) - the catalytic core - and CF(0) - the membrane proton channel. CF(1) has five subunits: alpha(3), beta(3), gamma(1), delta(1), epsilon(1). CF(0) has four main subunits: a(1), b(1), b'(1) and c(9-12).

It localises to the plastid. The protein localises to the chloroplast thylakoid membrane. The catalysed reaction is ATP + H2O + 4 H(+)(in) = ADP + phosphate + 5 H(+)(out). In terms of biological role, produces ATP from ADP in the presence of a proton gradient across the membrane. The catalytic sites are hosted primarily by the beta subunits. This is ATP synthase subunit beta, chloroplastic from Ostreococcus tauri.